Consider the following 274-residue polypeptide: uncharacterized protein (274 aa).

Positions 1-15 (MEESKTKRKEDRIDL) are enriched in basic and acidic residues. Residues 1–40 (MEESKTKRKEDRIDLKNTPPQKKSKRDSTNDETARTSLRS) form a disordered region. Residues 41–87 (IMPRGYKMMENMGYKEGETLGSNESALKEPIKVEINTKRRGIRAEKP) enclose the G-patch domain.

Its subcellular location is the cytoplasm. It localises to the nucleus. This is an uncharacterized protein from Saccharomyces cerevisiae (strain ATCC 204508 / S288c) (Baker's yeast).